The primary structure comprises 914 residues: Coatomer subunit beta' (914 aa).

WD repeat units follow at residues 13–54 (SRSD…KDFE), 55–94 (VCDV…KVHS), 97–136 (AHSD…ACQR), 140–180 (GHTH…ANFT), 183–224 (GHEK…CVQT), 227–266 (GHAQ…LETC), and 352–390 (ACEI…NKAF).

This sequence belongs to the WD repeat COPB2 family. As to quaternary structure, oligomeric complex that consists of at least the alpha, beta, beta', gamma, delta, epsilon and zeta subunits.

It is found in the cytoplasm. It localises to the golgi apparatus membrane. The protein resides in the cytoplasmic vesicle. Its subcellular location is the COPI-coated vesicle membrane. In terms of biological role, the coatomer is a cytosolic protein complex that binds to dilysine motifs and reversibly associates with Golgi non-clathrin-coated vesicles, which further mediate biosynthetic protein transport from the ER, via the Golgi up to the trans Golgi network. Coatomer complex is required for budding from Golgi membranes, and is essential for the retrograde Golgi-to-ER transport of dilysine-tagged proteins. In Drosophila melanogaster (Fruit fly), this protein is Coatomer subunit beta'.